Reading from the N-terminus, the 182-residue chain is Nascent polypeptide-associated complex subunit alpha (182 aa).

Positions asparagine 17 to isoleucine 81 constitute an NAC-A/B domain. Residues alanine 120–aspartate 148 form a disordered region. Residues alanine 131 to glutamate 141 show a composition bias toward acidic residues. The 39-residue stretch at isoleucine 144–serine 182 folds into the UBA domain.

It belongs to the NAC-alpha family. Part of the nascent polypeptide-associated complex (NAC), consisting of EGD2 and EGD1. NAC associates with ribosomes via EGD1.

It is found in the cytoplasm. The protein resides in the nucleus. Component of the nascent polypeptide-associated complex (NAC), a dynamic component of the ribosomal exit tunnel, protecting the emerging polypeptides from interaction with other cytoplasmic proteins to ensure appropriate nascent protein targeting. The NAC complex also promotes mitochondrial protein import by enhancing productive ribosome interactions with the outer mitochondrial membrane and blocks the inappropriate interaction of ribosomes translating non-secretory nascent polypeptides with translocation sites in the membrane of the endoplasmic reticulum. EGD2 may also be involved in transcription regulation. The sequence is that of Nascent polypeptide-associated complex subunit alpha (EGD2) from Lodderomyces elongisporus (strain ATCC 11503 / CBS 2605 / JCM 1781 / NBRC 1676 / NRRL YB-4239) (Yeast).